The primary structure comprises 312 residues: MPVIPVDKPLGLTSHDVVNRARRARGTRRVGHTGTLDPLATGVLVLCVDDSTKLVQFMEADSKEYLAWIALGGTSPTLDAEGPLTEVVPVSPPSEEEARAVLAGFVGPQAQVPPQYSAIQVGGQRAYAVARAGGALDLPARNIVIHALELLGISNRMAESPRTFARSSEGWTPDPTGRTFTLPEPLGEFPTLLVRASVSSGTYLRSLARDVGAALGVPAHLAGLVRTRVGRYDLADSVSVEDLAGAEGFPNLAALDLPRMEADEPLARALRQGKRPRSAVVGRHVVTRDGELVAVVDGDGKELRVVRAWAGA.

The Nucleophile role is filled by Asp37.

It belongs to the pseudouridine synthase TruB family. Type 1 subfamily.

It catalyses the reaction uridine(55) in tRNA = pseudouridine(55) in tRNA. Its function is as follows. Responsible for synthesis of pseudouridine from uracil-55 in the psi GC loop of transfer RNAs. The sequence is that of tRNA pseudouridine synthase B from Deinococcus geothermalis (strain DSM 11300 / CIP 105573 / AG-3a).